The chain runs to 75 residues: UPF0352 protein VV1_3121 (75 aa).

The protein belongs to the UPF0352 family.

In Vibrio vulnificus (strain CMCP6), this protein is UPF0352 protein VV1_3121.